Consider the following 891-residue polypeptide: Probable serine/threonine-protein kinase mkcC (891 aa).

5 disordered regions span residues 24–70 (IELN…TATI), 85–121 (ANNN…APSS), 264–435 (DDPQ…AREK), 495–526 (NSLG…PEVS), and 565–588 (TTAS…DDYD). A compositionally biased stretch (low complexity) spans 29–41 (QEEQQQPEQQEQP). Residues 45–58 (EELKDNNEKIKTSE) show a composition bias toward basic and acidic residues. Low complexity-rich tracts occupy residues 61 to 70 (TTTTTTTATI), 86 to 105 (NNNT…LNNN), 297 to 314 (STSN…TTGK), 322 to 360 (SNSS…SGTS), and 379 to 397 (TTGN…TTSS). Over residues 422-432 (RKRKEQKRSRA) the composition is skewed to basic residues. Low complexity predominate over residues 495-522 (NSLGSSINKNNSNNTTTTTTTTNTNNKS). The 249-residue stretch at 616–864 (YKNLKQIGSG…AEQLLKHPWI (249 aa)) folds into the Protein kinase domain. Residues 622-630 (IGSGGFGSV) and Lys-645 each bind ATP. Asp-735 functions as the Proton acceptor in the catalytic mechanism.

This sequence belongs to the protein kinase superfamily. STE Ser/Thr protein kinase family. STE20 subfamily. Requires Mg(2+) as cofactor.

The enzyme catalyses L-seryl-[protein] + ATP = O-phospho-L-seryl-[protein] + ADP + H(+). It catalyses the reaction L-threonyl-[protein] + ATP = O-phospho-L-threonyl-[protein] + ADP + H(+). This Dictyostelium discoideum (Social amoeba) protein is Probable serine/threonine-protein kinase mkcC.